The following is a 322-amino-acid chain: Cyanophycinase (322 aa).

Active-site charge relay system residues include S178, E196, and H220.

It belongs to the peptidase S51 family.

It catalyses the reaction [L-4-(L-arginin-2-N-yl)aspartate](n) + H2O = [L-4-(L-arginin-2-N-yl)aspartate](n-1) + L-4-(L-arginin-2-N-yl)aspartate. Functionally, exopeptidase that catalyzes the hydrolytic cleavage of multi-L-arginyl-poly-L-aspartic acid (cyanophycin; a water-insoluble reserve polymer) into aspartate-arginine dipeptides. The polypeptide is Cyanophycinase (cphB) (Synechococcus elongatus).